The following is a 375-amino-acid chain: Lipid-A-disaccharide synthase (375 aa).

It belongs to the LpxB family.

The catalysed reaction is a lipid X + a UDP-2-N,3-O-bis[(3R)-3-hydroxyacyl]-alpha-D-glucosamine = a lipid A disaccharide + UDP + H(+). Its pathway is bacterial outer membrane biogenesis; LPS lipid A biosynthesis. Its function is as follows. Condensation of UDP-2,3-diacylglucosamine and 2,3-diacylglucosamine-1-phosphate to form lipid A disaccharide, a precursor of lipid A, a phosphorylated glycolipid that anchors the lipopolysaccharide to the outer membrane of the cell. In Pseudomonas entomophila (strain L48), this protein is Lipid-A-disaccharide synthase.